Consider the following 465-residue polypeptide: 23S rRNA (uracil(1939)-C(5))-methyltransferase RlmD (465 aa).

The interval 1-22 (MSEAVPTSARKSKNAPVAPGPA) is disordered. In terms of domain architecture, TRAM spans 16–80 (PVAPGPAPVL…PSYEQATVVD (65 aa)). Positions 93, 99, 102, and 181 each coordinate [4Fe-4S] cluster. Positions 289, 318, 323, 339, 367, and 388 each coordinate S-adenosyl-L-methionine. Catalysis depends on C421, which acts as the Nucleophile.

It belongs to the class I-like SAM-binding methyltransferase superfamily. RNA M5U methyltransferase family. RlmD subfamily.

It carries out the reaction uridine(1939) in 23S rRNA + S-adenosyl-L-methionine = 5-methyluridine(1939) in 23S rRNA + S-adenosyl-L-homocysteine + H(+). Functionally, catalyzes the formation of 5-methyl-uridine at position 1939 (m5U1939) in 23S rRNA. The polypeptide is 23S rRNA (uracil(1939)-C(5))-methyltransferase RlmD (Burkholderia ambifaria (strain ATCC BAA-244 / DSM 16087 / CCUG 44356 / LMG 19182 / AMMD) (Burkholderia cepacia (strain AMMD))).